A 432-amino-acid chain; its full sequence is Phosphomethylpyrimidine synthase (432 aa).

Residues N69, M98, Y127, H163, 185–187 (SRG), 226–229 (DACR), and E265 contribute to the substrate site. Residue H269 participates in Zn(2+) binding. Residue Y292 participates in substrate binding. H333 serves as a coordination point for Zn(2+). [4Fe-4S] cluster contacts are provided by C409, C412, and C416.

Belongs to the ThiC family. [4Fe-4S] cluster serves as cofactor.

The enzyme catalyses 5-amino-1-(5-phospho-beta-D-ribosyl)imidazole + S-adenosyl-L-methionine = 4-amino-2-methyl-5-(phosphooxymethyl)pyrimidine + CO + 5'-deoxyadenosine + formate + L-methionine + 3 H(+). The protein operates within cofactor biosynthesis; thiamine diphosphate biosynthesis. Catalyzes the synthesis of the hydroxymethylpyrimidine phosphate (HMP-P) moiety of thiamine from aminoimidazole ribotide (AIR) in a radical S-adenosyl-L-methionine (SAM)-dependent reaction. The polypeptide is Phosphomethylpyrimidine synthase (Pelotomaculum thermopropionicum (strain DSM 13744 / JCM 10971 / SI)).